We begin with the raw amino-acid sequence, 2537 residues long: Centrosomal protein of 192 kDa (2537 aa).

Disordered stretches follow at residues 69 to 138 (FSVP…ATES) and 288 to 308 (HSSE…LPGT). Residues 70–81 (SVPSGSSPGSQS) are compositionally biased toward low complexity. Positions 106–122 (VESQRLSNALSKQSALQ) are enriched in polar residues. Over residues 288–298 (HSSETTHKESE) the composition is skewed to basic and acidic residues. Serine 812 bears the Phosphoserine mark. Disordered regions lie at residues 950-1021 (VTFE…QQQP), 1043-1064 (VSEP…DRKS), 1101-1158 (KGTL…WTSN), and 1182-1234 (ATSH…STVH). Over residues 960-970 (PKNSDLKNTSP) the composition is skewed to polar residues. Over residues 984-1005 (FRPSTSPLSHSSPSEISGTSSS) the composition is skewed to low complexity. Composition is skewed to polar residues over residues 1046-1055 (PESSYPTTAT) and 1103-1112 (TLSSIIQNNS). The span at 1128-1141 (EYVKPDFRWSKDPS) shows a compositional bias: basic and acidic residues. Over residues 1142–1158 (SKSGNLLETSEVGWTSN) the composition is skewed to polar residues. Residues 1195 to 1207 (EDQRISPKDKSTA) show a composition bias toward basic and acidic residues. Positions 1213–1234 (GQVSHQTTSENQCTPIPSSTVH) are enriched in polar residues. Phosphoserine is present on residues serine 1755, serine 2098, and serine 2110. Proline 2313 bears the Hydroxyproline mark.

As to quaternary structure, interacts with SHBG. Interacts with PLK4; this interaction mediates the formation of a ternary complex composed by PLK4, TENT5C and CEP192. Interacts with CCDC66. Hydroxylation by PHD1/EGLN2 at Pro-2313 promotes ubiquitination. Post-translationally, ubiquitinated by a SCF(SKP2) complex following proline hydroxylation. In terms of processing, ubiquitinated in a FBXL13-dependent manner, leading to proteasomal degradation.

Its subcellular location is the cytoplasm. The protein localises to the cytoskeleton. The protein resides in the microtubule organizing center. It localises to the centrosome. It is found in the centriole. Its function is as follows. Required for mitotic centrosome maturation and bipolar spindle assembly. Appears to be a major regulator of pericentriolar material (PCM) recruitment, centrosome maturation, and centriole duplication. Centrosome-specific activating scaffold for AURKA and PLK1. In Homo sapiens (Human), this protein is Centrosomal protein of 192 kDa.